We begin with the raw amino-acid sequence, 437 residues long: Transmembrane protease serine 4 (437 aa).

Topologically, residues 1-32 (MLQDPDSDQPLNSLDVKPLRKPRIPMETFRKV) are cytoplasmic. The helical; Signal-anchor for type II membrane protein transmembrane segment at 33–53 (GIPIIIALLSLASIIIVVVLI) threads the bilayer. Residues 54–437 (KVILDKYYFL…WIYNVWKAEL (384 aa)) are Extracellular-facing. The LDL-receptor class A domain occupies 61–93 (YFLCGQPLHFIPRKQLCDGELDCPLGEDEEHCV). 8 disulfide bridges follow: Cys-64–Cys-83, Cys-77–Cys-92, Cys-127–Cys-183, Cys-140–Cys-193, Cys-196–Cys-310, Cys-230–Cys-246, Cys-356–Cys-372, and Cys-383–Cys-410. The SRCR domain occupies 94–204 (KSFPEGPAVA…ACGKSLKTPR (111 aa)). 2 N-linked (GlcNAc...) asparagine glycosylation sites follow: Asn-130 and Asn-178. The region spanning 205-434 (VVGVEEASVD…YLNWIYNVWK (230 aa)) is the Peptidase S1 domain. Catalysis depends on charge relay system residues His-245 and Asp-290. Ser-387 functions as the Charge relay system in the catalytic mechanism.

It belongs to the peptidase S1 family. In terms of processing, proteolytically processed; probably by an autocatalytic mechanism. In terms of tissue distribution, high levels in pancreatic, gastric, colorectal and ampullary cancer. Very weak expression in normal gastrointestinal and urogenital tract. Coexpressed with ACE2 within mature enterocytes.

It localises to the cell membrane. Its subcellular location is the secreted. Its function is as follows. Plasma membrane-anchored serine protease that directly induces processing of pro-uPA/PLAU into the active form through proteolytic activity. Seems to be capable of activating ENaC. In terms of biological role, (Microbial infection) In gut epithelial cells, facilitates human coronavirus SARS-CoV-2 infection through, at least, the cleavage of coronavirus spike glycoproteins which activates the glycoprotein for host cell entry. The polypeptide is Transmembrane protease serine 4 (Homo sapiens (Human)).